The chain runs to 493 residues: Growth-regulating factor 8 (493 aa).

Positions 149 to 184 (AFSEAQWHELERQRNIYKYMMASVPVPPELLTPFPK) constitute a QLQ domain. One can recognise a WRC domain in the interval 243–287 (DLEPWRCKRTDGKKWRCSRNVIPDQKYCERHTHKSRPRSRKHVES). Short sequence motifs (bipartite nuclear localization signal) lie at residues 248–258 (RCKRTDGKKWR) and 276–283 (KSRPRSRK). The interval 270–302 (CERHTHKSRPRSRKHVESSHQSSHHNDIRTAKN) is disordered. Positions 273 to 283 (HTHKSRPRSRK) are enriched in basic residues.

It belongs to the GRF family. Predominantly expressed in shoot tips and flowers.

It is found in the nucleus. Functionally, transcription activator that plays a role in the regulation of cell expansion in leaf and cotyledons tissues. Component of a network formed by miR396, the GRFs and their interacting factors (GIFs) acting in the regulation of meristem function, at least partially through the control of cell proliferation. This Arabidopsis thaliana (Mouse-ear cress) protein is Growth-regulating factor 8 (GRF8).